Here is a 127-residue protein sequence, read N- to C-terminus: QGSKVIVMVTDLRESGKPKCERYFPENGEGVEYGSIHVETTQVTSYGGYQQRILAVKLAEEEVYDNDDGTEQNDEQTEEEPEVRYITHLQCKRWPDHGVPKSTSAIFRLYYKMLEYRPRDCEAPILV.

Positions 1–127 constitute a Tyrosine-protein phosphatase domain; that stretch reads QGSKVIVMVT…PRDCEAPILV (127 aa). Over residues 63 to 81 the composition is skewed to acidic residues; that stretch reads VYDNDDGTEQNDEQTEEEP. The disordered stretch occupies residues 63–82; that stretch reads VYDNDDGTEQNDEQTEEEPE.

This sequence belongs to the protein-tyrosine phosphatase family.

It carries out the reaction O-phospho-L-tyrosyl-[protein] + H2O = L-tyrosyl-[protein] + phosphate. The chain is Tyrosine-protein phosphatase 2 (STY-2) from Styela plicata (Wrinkled sea squirt).